The primary structure comprises 187 residues: UPF0301 protein Sputcn32_2681 (187 aa).

Belongs to the UPF0301 (AlgH) family.

The polypeptide is UPF0301 protein Sputcn32_2681 (Shewanella putrefaciens (strain CN-32 / ATCC BAA-453)).